The primary structure comprises 101 residues: Large ribosomal subunit protein uL23 (101 aa).

It belongs to the universal ribosomal protein uL23 family. In terms of assembly, part of the 50S ribosomal subunit. Contacts protein L29, and trigger factor when it is bound to the ribosome.

Its function is as follows. One of the early assembly proteins it binds 23S rRNA. One of the proteins that surrounds the polypeptide exit tunnel on the outside of the ribosome. Forms the main docking site for trigger factor binding to the ribosome. This chain is Large ribosomal subunit protein uL23, found in Micrococcus luteus (strain ATCC 4698 / DSM 20030 / JCM 1464 / CCM 169 / CCUG 5858 / IAM 1056 / NBRC 3333 / NCIMB 9278 / NCTC 2665 / VKM Ac-2230) (Micrococcus lysodeikticus).